The primary structure comprises 696 residues: Probable E3 ubiquitin ligase complex SCF subunit sconB (696 aa).

The segment covering 1 to 12 (MDAHELSFRDGH) has biased composition (basic and acidic residues). The segment at 1–72 (MDAHELSFRD…HSFNTQKPIR (72 aa)) is disordered. The span at 55-69 (PGSTQDKPHSFNTQK) shows a compositional bias: polar residues. The 47-residue stretch at 193-239 (IDFLTALPPEISFKILCYLDTTSLCKAAQVSRRWRALADDDVVWHRM) folds into the F-box domain. Residues 290–314 (SATIETAAAGSKRKPESGKEDTAMV) form a disordered region. The segment covering 302-313 (RKPESGKEDTAM) has biased composition (basic and acidic residues). WD repeat units lie at residues 365–402 (GHSN…ELRT), 405–444 (GHQS…STYS), 446–482 (HRGG…TCLL), 484–525 (GHTD…RTFH), 579–622 (DTPS…CLRT), 623–662 (FFGH…CERT), and 665–696 (GHSG…SFQT). The interval 554–596 (NVSVTSGDSPAASPQALPGFDGQTSDTPSSAFGPAFDDGRPSP) is disordered.

Belongs to the WD repeat MET30/SCONB/SCON-2 family. As to quaternary structure, component of the SCF(sconB) E3 ubiquitin ligase complex.

It functions in the pathway protein modification; protein ubiquitination. Component of the SCF(sconB) E3 ubiquitin ligase complex involved in the regulation of sulfur metabolite repression, probably by mediating the inactivation or degradation of the metR transcription factor. This Aspergillus fumigatus (strain ATCC MYA-4609 / CBS 101355 / FGSC A1100 / Af293) (Neosartorya fumigata) protein is Probable E3 ubiquitin ligase complex SCF subunit sconB (sconB).